The primary structure comprises 238 residues: MTHVEVVATITPQLYIEETLIQKINHRIDAIDVLELRIDQFENVTVDQVAEMITKLKVMQDSFKLLVTYRTKLQGGYGQFTNDSYLNLISDLANINGIDMIDIEWQADIDIEKHQRIITHLQQYNKEVIISHHNFESTPPLDELQFIFFKMQKFNPEYVKLAVMPHNKNDVLNLLQAMSTFSDTMDCKVVGISMSKLGLISRTAQGVFGGALTYGCIGEPQAPGQIDVTDLKAQVTLY.

3-dehydroquinate is bound by residues Glu35–Arg37 and Arg70. His133 serves as the catalytic Proton donor/acceptor. The Schiff-base intermediate with substrate role is filled by Lys160. Residues Arg202 and Gln225 each coordinate 3-dehydroquinate.

The protein belongs to the type-I 3-dehydroquinase family. As to quaternary structure, homodimer.

It catalyses the reaction 3-dehydroquinate = 3-dehydroshikimate + H2O. It participates in metabolic intermediate biosynthesis; chorismate biosynthesis; chorismate from D-erythrose 4-phosphate and phosphoenolpyruvate: step 3/7. Involved in the third step of the chorismate pathway, which leads to the biosynthesis of aromatic amino acids. Catalyzes the cis-dehydration of 3-dehydroquinate (DHQ) and introduces the first double bond of the aromatic ring to yield 3-dehydroshikimate. The sequence is that of 3-dehydroquinate dehydratase from Staphylococcus aureus (strain MRSA252).